Reading from the N-terminus, the 410-residue chain is Tyrosine--tRNA ligase (410 aa).

Residue Tyr36 participates in L-tyrosine binding. The 'HIGH' region signature appears at 41–50 (ATADSLTAGH). Residues Tyr169 and Gln173 each coordinate L-tyrosine. The 'KMSKS' region signature appears at 229-233 (KMGKT). Lys232 lines the ATP pocket. Residues 343 to 409 (IDLITMMIDA…GKKAYHLFRA (67 aa)) form the S4 RNA-binding domain.

It belongs to the class-I aminoacyl-tRNA synthetase family. TyrS type 1 subfamily. Homodimer.

It is found in the cytoplasm. The enzyme catalyses tRNA(Tyr) + L-tyrosine + ATP = L-tyrosyl-tRNA(Tyr) + AMP + diphosphate + H(+). Catalyzes the attachment of tyrosine to tRNA(Tyr) in a two-step reaction: tyrosine is first activated by ATP to form Tyr-AMP and then transferred to the acceptor end of tRNA(Tyr). This is Tyrosine--tRNA ligase from Lachnoclostridium phytofermentans (strain ATCC 700394 / DSM 18823 / ISDg) (Clostridium phytofermentans).